Here is a 491-residue protein sequence, read N- to C-terminus: Ketol-acid reductoisomerase (NADP(+)) (491 aa).

The KARI N-terminal Rossmann domain maps to 15-208 (AQLGKCRFMG…GGHRAGVLES (194 aa)). Residues 45–48 (CGAQ), arginine 68, arginine 76, serine 78, and 108–110 (DKQ) each bind NADP(+). Histidine 132 is an active-site residue. An NADP(+)-binding site is contributed by glycine 158. KARI C-terminal knotted domains lie at 209–344 (SFVA…TAPQ) and 345–484 (YEGK…MTDM). Mg(2+) is bound by residues aspartate 217, glutamate 221, glutamate 389, and glutamate 393. Serine 414 lines the substrate pocket.

The protein belongs to the ketol-acid reductoisomerase family. Mg(2+) is required as a cofactor.

It catalyses the reaction (2R)-2,3-dihydroxy-3-methylbutanoate + NADP(+) = (2S)-2-acetolactate + NADPH + H(+). The enzyme catalyses (2R,3R)-2,3-dihydroxy-3-methylpentanoate + NADP(+) = (S)-2-ethyl-2-hydroxy-3-oxobutanoate + NADPH + H(+). The protein operates within amino-acid biosynthesis; L-isoleucine biosynthesis; L-isoleucine from 2-oxobutanoate: step 2/4. Its pathway is amino-acid biosynthesis; L-valine biosynthesis; L-valine from pyruvate: step 2/4. Its function is as follows. Involved in the biosynthesis of branched-chain amino acids (BCAA). Catalyzes an alkyl-migration followed by a ketol-acid reduction of (S)-2-acetolactate (S2AL) to yield (R)-2,3-dihydroxy-isovalerate. In the isomerase reaction, S2AL is rearranged via a Mg-dependent methyl migration to produce 3-hydroxy-3-methyl-2-ketobutyrate (HMKB). In the reductase reaction, this 2-ketoacid undergoes a metal-dependent reduction by NADPH to yield (R)-2,3-dihydroxy-isovalerate. The chain is Ketol-acid reductoisomerase (NADP(+)) from Salmonella typhimurium (strain LT2 / SGSC1412 / ATCC 700720).